The following is a 387-amino-acid chain: 1-deoxy-D-xylulose 5-phosphate reductoisomerase (387 aa).

NADPH is bound by residues T10, G11, S12, I13, G36, N38, and N122. 1-deoxy-D-xylulose 5-phosphate is bound at residue K123. NADPH is bound at residue E124. A Mn(2+)-binding site is contributed by D148. 1-deoxy-D-xylulose 5-phosphate is bound by residues S149, E150, S174, and H197. E150 contacts Mn(2+). G203 contacts NADPH. Residues S210, N215, K216, and E219 each coordinate 1-deoxy-D-xylulose 5-phosphate. E219 is a Mn(2+) binding site.

Belongs to the DXR family. Mg(2+) serves as cofactor. Requires Mn(2+) as cofactor.

The catalysed reaction is 2-C-methyl-D-erythritol 4-phosphate + NADP(+) = 1-deoxy-D-xylulose 5-phosphate + NADPH + H(+). Its pathway is isoprenoid biosynthesis; isopentenyl diphosphate biosynthesis via DXP pathway; isopentenyl diphosphate from 1-deoxy-D-xylulose 5-phosphate: step 1/6. Catalyzes the NADPH-dependent rearrangement and reduction of 1-deoxy-D-xylulose-5-phosphate (DXP) to 2-C-methyl-D-erythritol 4-phosphate (MEP). This is 1-deoxy-D-xylulose 5-phosphate reductoisomerase from Chloroherpeton thalassium (strain ATCC 35110 / GB-78).